A 555-amino-acid chain; its full sequence is F-box only protein 33 (555 aa).

The region spanning 65-111 (AAGAASLPSELIVHIFSFLPAPDRLRASASCSHWRECLFYPALWPQL) is the F-box domain.

As to quaternary structure, part of the SCF (SKP1-CUL1-F-box) E3 ubiquitin-protein ligase complex SCF(FBXO33) formed of CUL1, SKP1, RBX1 and FBXO33. Interacts via its N-terminus with YBX1 CSD domain. Directly interacts with SKP1 and CUL1.

It participates in protein modification; protein ubiquitination. Functionally, substrate recognition component of a SCF (SKP1-CUL1-F-box protein) E3 ubiquitin-protein ligase complex which mediates the ubiquitination and subsequent proteasomal degradation of target proteins. Probably recognizes and binds to phosphorylated target proteins. Recognizes YBX1. The chain is F-box only protein 33 (FBXO33) from Homo sapiens (Human).